A 510-amino-acid chain; its full sequence is 2,3-bisphosphoglycerate-independent phosphoglycerate mutase (510 aa).

2 residues coordinate Mn(2+): Asp-13 and Ser-63. Residue Ser-63 is the Phosphoserine intermediate of the active site. Residues His-124, 154 to 155 (RD), Arg-186, Arg-192, 262 to 265 (RADR), and Lys-334 each bind substrate. Residues Asp-401, His-405, Asp-442, His-443, and His-461 each coordinate Mn(2+).

Belongs to the BPG-independent phosphoglycerate mutase family. In terms of assembly, monomer. It depends on Mn(2+) as a cofactor.

The catalysed reaction is (2R)-2-phosphoglycerate = (2R)-3-phosphoglycerate. It participates in carbohydrate degradation; glycolysis; pyruvate from D-glyceraldehyde 3-phosphate: step 3/5. Its function is as follows. Catalyzes the interconversion of 2-phosphoglycerate and 3-phosphoglycerate. The protein is 2,3-bisphosphoglycerate-independent phosphoglycerate mutase of Aliivibrio fischeri (strain ATCC 700601 / ES114) (Vibrio fischeri).